We begin with the raw amino-acid sequence, 68 residues long: MKKGIHPELKKARIVCACGAVYETLSTKEYMTVEICSKCHPFFTGQRKFVDTEGRVERFAKKYNWEIK.

The Zn(2+) site is built by Cys16, Cys18, Cys36, and Cys39.

Belongs to the bacterial ribosomal protein bL31 family. Type A subfamily. Part of the 50S ribosomal subunit. Zn(2+) is required as a cofactor.

Binds the 23S rRNA. This is Large ribosomal subunit protein bL31 from Dictyoglomus thermophilum (strain ATCC 35947 / DSM 3960 / H-6-12).